Reading from the N-terminus, the 891-residue chain is Translation initiation factor IF-2 (891 aa).

The tract at residues 50 to 303 (KKEHGSADES…TSMQHGFDKS (254 aa)) is disordered. Composition is skewed to basic and acidic residues over residues 102-237 (TLEE…KTAD) and 245-261 (HAREAEDAADRKDEQQP). The region spanning 390–559 (GRAPVVTIMG…LLQSEVLELT (170 aa)) is the tr-type G domain. The segment at 399 to 406 (GHVDHGKT) is G1. Residue 399-406 (GHVDHGKT) coordinates GTP. The tract at residues 424-428 (GITQH) is G2. The tract at residues 445–448 (DTPG) is G3. GTP-binding positions include 445–449 (DTPGH) and 499–502 (NKID). Residues 499–502 (NKID) form a G4 region. The tract at residues 535-537 (SAK) is G5.

It belongs to the TRAFAC class translation factor GTPase superfamily. Classic translation factor GTPase family. IF-2 subfamily.

The protein localises to the cytoplasm. Functionally, one of the essential components for the initiation of protein synthesis. Protects formylmethionyl-tRNA from spontaneous hydrolysis and promotes its binding to the 30S ribosomal subunits. Also involved in the hydrolysis of GTP during the formation of the 70S ribosomal complex. This Aliivibrio salmonicida (strain LFI1238) (Vibrio salmonicida (strain LFI1238)) protein is Translation initiation factor IF-2.